The primary structure comprises 269 residues: 2-heptyl-3-hydroxy-4(1H)-quinolone dioxygenase (269 aa).

His97 lines the substrate pocket. His246 (proton donor/acceptor) is an active-site residue.

Belongs to the AB hydrolase superfamily. As to quaternary structure, monomer.

It carries out the reaction 2-heptyl-3-hydroxy-4(1H)-quinolone + O2 = N-octanoylanthranilate + CO + H(+). Its function is as follows. Ring-cleaving dioxygenase involved in the degradation pathway of the Pseudomonas aeruginosa quorum sensing signal molecules HHQ (2-heptyl-4-quinolone) and PQS (2-heptyl-3-hydroxy-4(1H)-quinolone) to anthranilate. Catalyzes the cleavage of PQS to form N-octanoylanthranilate and carbon monoxide. Thus, leads to the inactivation of PQS that plays a central role in the regulation of virulence factor production by P.aeruginosa, thereby quenching the production of antimicrobials, which may contribute to the competitiveness of M.abscessus in presence of P.aeruginosa. In vitro, can also use other 2-alkyl-3-hydroxy-4(1H)-quinolone (AHQ) substrates with shorter alkyl substituents at C2, but with lower efficiency. This Mycobacteroides abscessus (strain ATCC 19977 / DSM 44196 / CCUG 20993 / CIP 104536 / JCM 13569 / NCTC 13031 / TMC 1543 / L948) (Mycobacterium abscessus) protein is 2-heptyl-3-hydroxy-4(1H)-quinolone dioxygenase.